Here is a 205-residue protein sequence, read N- to C-terminus: Small ribosomal subunit protein uS3c (205 aa).

Residues 37–106 form the KH type-2 domain; that stretch reads IRQLLRDYVL…TWRISLVEVS (70 aa).

Belongs to the universal ribosomal protein uS3 family. As to quaternary structure, part of the 30S ribosomal subunit.

The protein localises to the plastid. It is found in the chloroplast. This is Small ribosomal subunit protein uS3c (rps3) from Cyanidioschyzon merolae (strain NIES-3377 / 10D) (Unicellular red alga).